The sequence spans 108 residues: Ribonuclease P protein component 4 (108 aa).

Cys60, Cys63, Cys86, and Cys89 together coordinate Zn(2+).

Belongs to the eukaryotic/archaeal RNase P protein component 4 family. As to quaternary structure, consists of a catalytic RNA component and at least 4-5 protein subunits. It depends on Zn(2+) as a cofactor.

It localises to the cytoplasm. The catalysed reaction is Endonucleolytic cleavage of RNA, removing 5'-extranucleotides from tRNA precursor.. Part of ribonuclease P, a protein complex that generates mature tRNA molecules by cleaving their 5'-ends. This chain is Ribonuclease P protein component 4, found in Sulfurisphaera tokodaii (strain DSM 16993 / JCM 10545 / NBRC 100140 / 7) (Sulfolobus tokodaii).